A 384-amino-acid polypeptide reads, in one-letter code: 4-hydroxy-3-methylbut-2-en-1-yl diphosphate synthase (flavodoxin) (384 aa).

Residues Cys-280, Cys-283, Cys-315, and Glu-322 each coordinate [4Fe-4S] cluster.

The protein belongs to the IspG family. Requires [4Fe-4S] cluster as cofactor.

It carries out the reaction (2E)-4-hydroxy-3-methylbut-2-enyl diphosphate + oxidized [flavodoxin] + H2O + 2 H(+) = 2-C-methyl-D-erythritol 2,4-cyclic diphosphate + reduced [flavodoxin]. Its pathway is isoprenoid biosynthesis; isopentenyl diphosphate biosynthesis via DXP pathway; isopentenyl diphosphate from 1-deoxy-D-xylulose 5-phosphate: step 5/6. Converts 2C-methyl-D-erythritol 2,4-cyclodiphosphate (ME-2,4cPP) into 1-hydroxy-2-methyl-2-(E)-butenyl 4-diphosphate. The protein is 4-hydroxy-3-methylbut-2-en-1-yl diphosphate synthase (flavodoxin) of Frankia casuarinae (strain DSM 45818 / CECT 9043 / HFP020203 / CcI3).